We begin with the raw amino-acid sequence, 73 residues long: Small ribosomal subunit protein bS18B (73 aa).

It belongs to the bacterial ribosomal protein bS18 family. In terms of assembly, part of the 30S ribosomal subunit. Forms a tight heterodimer with protein bS6.

Its function is as follows. Binds as a heterodimer with protein bS6 to the central domain of the 16S rRNA, where it helps stabilize the platform of the 30S subunit. The protein is Small ribosomal subunit protein bS18B of Frankia alni (strain DSM 45986 / CECT 9034 / ACN14a).